The sequence spans 34 residues: Somatostatin (34 aa).

A disordered region spans residues 1 to 20; that stretch reads AVERPRQDGQVHEPPGRERK. Residues Cys23 and Cys34 are joined by a disulfide bond.

Belongs to the somatostatin family.

It localises to the secreted. Functionally, somatostatin inhibits the release of somatotropin. This chain is Somatostatin (sst), found in Myxine glutinosa (Atlantic hagfish).